Consider the following 380-residue polypeptide: tRNA (guanine(26)-N(2))-dimethyltransferase (380 aa).

One can recognise a Trm1 methyltransferase domain in the interval 2–374 (ITVNEGSVTI…AGIGEIEEVL (373 aa)). Arginine 35, arginine 65, aspartate 83, aspartate 109, and alanine 110 together coordinate S-adenosyl-L-methionine. Positions 242, 245, 261, and 264 each coordinate Zn(2+).

Belongs to the class I-like SAM-binding methyltransferase superfamily. Trm1 family.

The catalysed reaction is guanosine(26) in tRNA + 2 S-adenosyl-L-methionine = N(2)-dimethylguanosine(26) in tRNA + 2 S-adenosyl-L-homocysteine + 2 H(+). Functionally, dimethylates a single guanine residue at position 26 of a number of tRNAs using S-adenosyl-L-methionine as donor of the methyl groups. The chain is tRNA (guanine(26)-N(2))-dimethyltransferase from Methanothermobacter thermautotrophicus (strain ATCC 29096 / DSM 1053 / JCM 10044 / NBRC 100330 / Delta H) (Methanobacterium thermoautotrophicum).